The primary structure comprises 172 residues: Adenine phosphoribosyltransferase (172 aa).

Belongs to the purine/pyrimidine phosphoribosyltransferase family. Homodimer.

The protein localises to the cytoplasm. It carries out the reaction AMP + diphosphate = 5-phospho-alpha-D-ribose 1-diphosphate + adenine. The protein operates within purine metabolism; AMP biosynthesis via salvage pathway; AMP from adenine: step 1/1. Its function is as follows. Catalyzes a salvage reaction resulting in the formation of AMP, that is energically less costly than de novo synthesis. The polypeptide is Adenine phosphoribosyltransferase (Herpetosiphon aurantiacus (strain ATCC 23779 / DSM 785 / 114-95)).